A 196-amino-acid chain; its full sequence is Thymidine kinase (196 aa).

Position 17–24 (17–24 (GPMFAGKT)) interacts with ATP. Glu92 acts as the Proton acceptor in catalysis. Phe121 contacts substrate. 2 residues coordinate Zn(2+): Cys146 and Cys149. Position 166–170 (166–170 (LILAG)) interacts with substrate. Cys179 and Cys182 together coordinate Zn(2+).

This sequence belongs to the thymidine kinase family.

It carries out the reaction thymidine + ATP = dTMP + ADP + H(+). Functionally, phosphorylates thymidine. ASFV replicates in the cytoplasm of infected cells and contains genes encoding a number of enzymes needed for DNA synthesis, including thymidine kinase. Important for growth in swine macrophages in vitro and is a virus virulence factor in swine. The chain is Thymidine kinase from African swine fever virus (strain Badajoz 1971 Vero-adapted) (Ba71V).